A 93-amino-acid chain; its full sequence is Small ribosomal subunit protein uS15 (93 aa).

It belongs to the universal ribosomal protein uS15 family. As to quaternary structure, part of the 30S ribosomal subunit. Forms a bridge to the 50S subunit in the 70S ribosome, contacting the 23S rRNA.

In terms of biological role, one of the primary rRNA binding proteins, it binds directly to 16S rRNA where it helps nucleate assembly of the platform of the 30S subunit by binding and bridging several RNA helices of the 16S rRNA. Functionally, forms an intersubunit bridge (bridge B4) with the 23S rRNA of the 50S subunit in the ribosome. This is Small ribosomal subunit protein uS15 from Anaplasma marginale (strain Florida).